The following is a 908-amino-acid chain: Translation initiation factor IF-2 (908 aa).

Disordered regions lie at residues Glu-123–Lys-154 and Lys-212–Lys-278. Residues Glu-407–Lys-577 form the tr-type G domain. The segment at Gly-416–Thr-423 is G1. Residue Gly-416 to Thr-423 coordinates GTP. Residues Gly-441–His-445 form a G2 region. A G3 region spans residues Asp-463–Gly-466. Residues Asp-463–His-467 and Asn-517–Asp-520 contribute to the GTP site. Residues Asn-517–Asp-520 form a G4 region. A G5 region spans residues Ser-553–Ile-555.

Belongs to the TRAFAC class translation factor GTPase superfamily. Classic translation factor GTPase family. IF-2 subfamily.

It is found in the cytoplasm. One of the essential components for the initiation of protein synthesis. Protects formylmethionyl-tRNA from spontaneous hydrolysis and promotes its binding to the 30S ribosomal subunits. Also involved in the hydrolysis of GTP during the formation of the 70S ribosomal complex. This chain is Translation initiation factor IF-2, found in Amoebophilus asiaticus (strain 5a2).